A 199-amino-acid chain; its full sequence is CASP-like protein 4C1 (199 aa).

At 1–35 (MESGSVANDSGPLNSTPDVHLYGKTAAMKQRRSNT) the chain is on the cytoplasmic side. The chain crosses the membrane as a helical span at residues 36–56 (MLFVFRLLTFSFSLAAVLVMG). Over 57–80 (TNKQKIRSAPQYLEVAWHDFDPFR) the chain is Extracellular. Residues 81–101 (YVFAVNAIICVYSFVETWLAV) form a helical membrane-spanning segment. Topologically, residues 102–124 (YTLSRGTLLLPETFQVWFDYGHD) are cytoplasmic. A helical membrane pass occupies residues 125–145 (QGFACLLFSANSVGIAMAQLL). The Extracellular segment spans residues 146 to 169 (QSGSTLIQGQYYCSDAGAYCTQAR). A helical membrane pass occupies residues 170-190 (VSIAMGFGAFLFLALSSFLTG). Over 191 to 199 (LRVARWYLP) the chain is Cytoplasmic.

It belongs to the Casparian strip membrane proteins (CASP) family. As to quaternary structure, homodimer and heterodimers.

It localises to the cell membrane. The sequence is that of CASP-like protein 4C1 from Physcomitrium patens (Spreading-leaved earth moss).